The sequence spans 690 residues: Cyclic nucleotide-gated channel alpha-1 (690 aa).

Topologically, residues 1–163 are cytoplasmic; the sequence is MKKVIINTWH…VVIDPSGNTY (163 aa). 2 disordered regions span residues 33 to 76 and 88 to 151; these read GACS…PSQR and NVNN…EEKK. The span at 40–54 shows a compositional bias: acidic residues; the sequence is GDDDDSASMFEESET. The segment covering 64–76 has biased composition (polar residues); it reads RSNTHGSGQPSQR. The segment covering 111-151 has biased composition (basic and acidic residues); the sequence is SKPDDKNENKKDPEKKKKKEKDKDKKKKEEKGKDKKEEEKK. The helical transmembrane segment at 164–185 threads the bilayer; it reads YNWLFCITLPVMYNWTMIIARA. Residues 186–195 lie on the Extracellular side of the membrane; it reads CFDELQSDYL. Residues 196-215 form a helical membrane-spanning segment; the sequence is EYWLAFDYLSDVVYLLDMFV. Over 216–241 the chain is Cytoplasmic; it reads RTRTGYLEQGLLVKEERKLIDKYKST. A helical membrane pass occupies residues 242 to 251; sequence FQFKLDVLSV. Over 252–264 the chain is Extracellular; sequence IPTDLLYIKFGWN. A helical membrane pass occupies residues 265-283; sequence YPEIRLNRLLRISRMFEFF. The Cytoplasmic segment spans residues 284–291; the sequence is QRTETRTN. A helical transmembrane segment spans residues 292–315; it reads YPNIFRISNLVMYIIIIIHWNACV. The segment at 293–402 is ion conduction pathway; it reads PNIFRISNLV…NIGSMISNMN (110 aa). Topologically, residues 316–342 are extracellular; it reads YFSISKAIGFGNDTWVYPDVNDPDFGR. A glycan (N-linked (GlcNAc...) asparagine) is linked at Asn-327. The next 2 helical transmembrane spans lie at 343–373 and 374–399; these read LARK…DSEY and FFVV…SMIS. Residues 360 to 363 form a selectivity filter region; sequence TIGE. Residues 400 to 690 lie on the Cytoplasmic side of the membrane; the sequence is NMNAARAEFQ…ESGPTDSTQD (291 aa). Residues 403–479 are C-linker; the sequence is AARAEFQARI…DTLKKVRIFA (77 aa). The segment at 482–603 is cyclic nucleotide-binding domain (CNBD); that stretch reads EAGLLVELVL…EEKGKQILMK (122 aa). The 3',5'-cyclic GMP site is built by Gly-543, Ser-546, Arg-559, and Thr-560. Positions 559 and 560 each coordinate 3',5'-cyclic AMP. Residues 621–664 are a coiled coil; the sequence is LEEKVTRMESSVDLLQTRFARILAEYESMQQKLKQRLTKVEKFL.

It belongs to the cyclic nucleotide-gated cation channel (TC 1.A.1.5) family. CNGA1 subfamily. As to quaternary structure, forms a heterotetramer with CNGB1 in a 3:1 ratio. May also form cyclic nucleotide-activated homotetrameric channels, that are efficiently activated by saturating cGMP, but poorly activated by saturating cAMP compared to the heterotetramer with CNGB1. The channel binds Ca(2+)-bound CALM1 via CaM1 and CaM2 regions of the CNGB1 subunit; this interaction modulates the affinity of the channel for cNMPs in response to intracellular Ca(2+) levels. In terms of tissue distribution, expressed in the retina, in rod cells (at protein level).

The protein resides in the cell membrane. It carries out the reaction Ca(2+)(in) = Ca(2+)(out). The enzyme catalyses Na(+)(in) = Na(+)(out). It catalyses the reaction K(+)(in) = K(+)(out). The catalysed reaction is NH4(+)(in) = NH4(+)(out). It carries out the reaction Rb(+)(in) = Rb(+)(out). The enzyme catalyses Li(+)(in) = Li(+)(out). It catalyses the reaction Cs(+)(in) = Cs(+)(out). In terms of biological role, pore-forming subunit of the rod cyclic nucleotide-gated channel. Mediates rod photoresponses at dim light converting transient changes in intracellular cGMP levels into electrical signals. In the dark, cGMP levels are high and keep the channel open enabling a steady inward current carried by Na(+) and Ca(2+) ions that leads to membrane depolarization and neurotransmitter release from synaptic terminals. Upon photon absorption cGMP levels decline leading to channel closure and membrane hyperpolarization that ultimately slows neurotransmitter release and signals the presence of light, the end point of the phototransduction cascade. Conducts cGMP- and cAMP-gated ion currents, with permeability for monovalent and divalent cations. The selectivity for Ca(2+) over Na(+) increases with cGMP concentrations, whereas the selectivity among monovalent ions is independent of the cGMP levels. This Bos taurus (Bovine) protein is Cyclic nucleotide-gated channel alpha-1.